The following is a 1334-amino-acid chain: Putative transmembrane protein ORF1334 (1334 aa).

A helical transmembrane segment spans residues 53–73; that stretch reads VSIVVLVLTLFIIPVIIPPAH. The segment at 1107-1135 is disordered; that stretch reads LSASTTPPSSTTPTPPSSSSSSSSSSSIS. Over residues 1110 to 1135 the composition is skewed to low complexity; it reads STTPPSSTTPTPPSSSSSSSSSSSIS. 3 consecutive transmembrane segments (helical) span residues 1256 to 1276, 1292 to 1312, and 1313 to 1333; these read AVLP…SFFI, IIYI…TSVV, and YGTV…SRSQ.

Its subcellular location is the host membrane. This chain is Putative transmembrane protein ORF1334, found in Acidianus two-tailed virus (ATV).